A 1384-amino-acid chain; its full sequence is Protein Gawky (1384 aa).

Disordered regions lie at residues 1–99 (MREA…VWTG), 148–227 (NGSS…DPRG), 263–335 (TAST…DDGT), and 447–501 (VGAP…SGWS). The tract at residues 1 to 205 (MREALFSQDG…HRGGNGSGAT (205 aa)) is required for interaction with AGO1. 2 sufficient for miRNA-mediated silencing regions span residues 1–605 (MREA…SLGS) and 605–830 (SYAD…SVHL). The segment covering 15–24 (HVNQDTNWEV) has biased composition (polar residues). Positions 150–171 (SSNITGSSGVATGSSGNSSNAG) are enriched in low complexity. Residues 205–490 (TSSDPRDIRM…GVSWGNKQSK (286 aa)) form a minimal N-terminal region required for miRNA-mediated silencing region. The span at 208-225 (DPRDIRMIDPRDPIRGDP) shows a compositional bias: basic and acidic residues. Composition is skewed to polar residues over residues 449–475 (APSS…NSWS) and 485–501 (GNKQ…SGWS). The 42-residue stretch at 547–588 (IIKQSKQYRILVENGFKKEDVERALVIANMNIEEAADMLRAN) folds into the UBA domain. Disordered stretches follow at residues 607-626 (ADHN…PVNS), 809-841 (QNMQ…LRGH), 889-942 (TEFS…NKDW), 962-1022 (EPGK…LSSS), 1052-1102 (TSPL…GVQT), 1188-1221 (SENE…GVGT), and 1318-1368 (GTAN…PSGR). Positions 809-826 (QNMQPTSQQQQPQQQQLP) are enriched in low complexity. The not required for interaction with AGO1 or miRNAs or for localization to P-bodies but necessary for miRNA-mediated silencing and for interaction with pAbp stretch occupies residues 862 to 1115 (YQGASNQQSR…NWTGGNTTWG (254 aa)). Residues 898–924 (TKQNLTANTSNINSLGLQNDSTWSTGR) are compositionally biased toward polar residues. A sufficient for miRNA-mediated silencing region spans residues 940 to 1215 (KDWSVAQPTS…TSSSGTSGGN (276 aa)). The segment covering 1010 to 1022 (SPTDLPPLSLSSS) has biased composition (low complexity). Residues 1052-1061 (TSPLNKSSSR) show a composition bias toward polar residues. The segment covering 1068–1084 (TANSNKSANSNASTPTT) has biased composition (low complexity). The RRM domain occupies 1117-1189 (SWLLLKNLTA…TTIFAESPSE (73 aa)). Polar residues predominate over residues 1188–1203 (SENEVQSIMQHLPQTP). Positions 1200–1384 (PQTPSSTSSS…ISLVYSIVDD (185 aa)) are not required for interaction with AGO1 or miRNAs or for localization to P-bodies but necessary for miRNA-mediated silencing, dissociation from AGO1 and miRNAs and interaction with pAbp. A compositionally biased stretch (gly residues) spans 1211-1220 (TSGGNVGGVG). The segment covering 1318 to 1349 (GTANSSGSKSSANNLASGQSSASNLTNSTNST) has biased composition (low complexity). Residues 1350–1365 (WRQTSQNQALQSQSRP) are compositionally biased toward polar residues.

Belongs to the GW182 family. Component of the miRNA-directed RNA-induced silencing complex (miRISC), composed of at least AGO1 and gw, which bind mature miRNAs and targets the selective destruction of homologous RNAs. Interacts (via N-terminal region) with AGO1 (via Piwi domain); the interaction is essential for localization of AGO1 in P-bodies and for miRNA-mediated silencing. Interacts with pAbp/PABPC1; this interaction interferes with the binding of pAbp to eIF4G and is required for miRNA-mediated silencing. Interacts with CCR4-NOT complex members Not1, Rga/NOT2, twin/CCR4, Pop2 and NOT3/5 and with PAN complex members CG8232/PAN2 and CG11486/PAN3.

The protein localises to the cytoplasm. Its subcellular location is the P-body. Its function is as follows. Required for gene silencing mediated by micro-RNAs (miRNAs). Silences both polyadenylated and deadenylated mRNAs. Required for miRNA-mediated translational repression and mRNA decay. Not required for miRNA target recognition. Necessary to initiate but not to maintain silencing. Promotes mRNA deadenylation through the recruitment of the CCR4-NOT and PAN complexes and promotes decapping by the DCP1-DCP2 complex. Dissociates from silenced mRNAs after deadenylation. Required for completion of nuclear divisions during early embryonic development. The polypeptide is Protein Gawky (Drosophila melanogaster (Fruit fly)).